The primary structure comprises 146 residues: UPF0735 ACT domain-containing protein Teth514_2312 (146 aa).

Residues 71 to 146 (TLSMVLDHMP…GVRKIEILGE (76 aa)) form the ACT domain.

It belongs to the UPF0735 family.

This Thermoanaerobacter sp. (strain X514) protein is UPF0735 ACT domain-containing protein Teth514_2312.